A 507-amino-acid chain; its full sequence is Sugar transport protein 6 (507 aa).

Residues 1–20 (MAVVVSNANAPAFEAKMTVY) are Cytoplasmic-facing. Helical transmembrane passes span 21-41 (VFICVMIAAVGGLIFGYDIGI), 78-98 (FLQLFTSSLYLAALVASFVAS), 115-135 (IFFLIGVGLTAGAVNLVMLII), 138-158 (LFLGFGVGFGNQAVPLFLSEI), 165-185 (GGLNIVFQLMVTIGILIANIV), 199-219 (IALGGAGIPAVILLFGSLLII), 280-300 (FIIGMLLQLFQQFTGINAIMF), 318-338 (LSAVITGSINVLATFVGIYLV), 345-365 (FLLLQSSVHMLICQLIIGIIL), 381-401 (LVVVIFVCVYVMGFAWSWGPL), 418-438 (GFAVAVSCNMFFTFVIAQAFL), and 447-467 (GIFFFFSGWIIVMGLFAFFFI). Residues 468–507 (PETKGIAIDDMRESVWKPHWFWKRYMLPEDDHHDIEKRNA) are Cytoplasmic-facing.

The protein belongs to the major facilitator superfamily. Sugar transporter (TC 2.A.1.1) family. Pollen specific.

It localises to the membrane. Its activity is regulated as follows. Inhibited by uncouplers such as 2,4-dinitrophenol and carbonyl cyanide-m-chlorophenyl-hydrazone. In terms of biological role, mediates an active uptake of hexoses, probably by sugar/hydrogen symport. Can transport glucose, 3-O-methylglucose, mannose, fructose and galactose, and, to a lower extent, xylose and ribulose. The chain is Sugar transport protein 6 (STP6) from Arabidopsis thaliana (Mouse-ear cress).